Reading from the N-terminus, the 676-residue chain is Beta-taxilin (676 aa).

Disordered regions lie at residues 1–55 (MEND…DISE) and 71–131 (AASL…EQKL). 2 stretches are compositionally biased toward polar residues: residues 8 to 25 (EKQQ…QGQS) and 34 to 45 (QPLSPTNQTSAQ). The span at 75 to 92 (VEKEGTTAETDKPEKEDV) shows a compositional bias: basic and acidic residues. The span at 93 to 105 (GSMEDAECEDVNE) shows a compositional bias: acidic residues. Basic and acidic residues predominate over residues 106-131 (ESEKDKPAPGDASRAKEPSASKEQKL). Residues 157-461 (EEKLDLLFKK…LYRKIKQAQL (305 aa)) are a coiled coil. Positions 464 to 486 (EVNGNDILEEDDDANTNPSSSEQ) are disordered.

It belongs to the taxilin family. In terms of tissue distribution, specifically expressed in skeletal and cardiac muscle.

The protein resides in the cytoplasm. Functionally, promotes neurite-outgrowth. May be involved in intracellular vesicle traffic. This Gallus gallus (Chicken) protein is Beta-taxilin (TXLNB).